The chain runs to 928 residues: Nitrogen network kinase 1 (928 aa).

Positions 1-12 (MFTSQRQLRQNG) are enriched in polar residues. Disordered stretches follow at residues 1-43 (MFTS…SYGR) and 81-118 (HEHPSRSTLVQLQTRSQPDDVASSQVNPEGGTDDLELG). The segment covering 13–29 (SPMSSSRSSQHSSGTAS) has biased composition (low complexity). Polar residues-rich tracts occupy residues 30–40 (PISDSPASNRS) and 86–107 (RSTLVQLQTRSQPDDVASSQVN). Residues S178 and S179 each carry the phosphoserine modification. The tract at residues 374 to 394 (ANDDNINSRNTPNNSNDTYVN) is disordered. The segment covering 375 to 391 (NDDNINSRNTPNNSNDT) has biased composition (low complexity). 2 positions are modified to phosphoserine: S405 and S426. The region spanning 449 to 912 (HRLGKIIGFG…WKLKRIEEVL (464 aa)) is the Protein kinase domain. ATP-binding positions include 455-463 (IGFGAWGII) and K478. Residue D580 is the Proton acceptor of the active site. Disordered regions lie at residues 670–741 (ENRK…KYIG) and 767–813 (YDSP…SGSS). Residues 683-696 (VSSSSHSLKHLNQP) are compositionally biased toward polar residues. The residue at position 737 (S737) is a Phosphoserine. Phosphotyrosine is present on Y739. Over residues 769–813 (SPDSSQSEISAASSSSSNLSSLSSSTKASAVTNSGVTTSSPSGSS) the composition is skewed to low complexity.

This sequence belongs to the protein kinase superfamily. Ser/Thr protein kinase family. In terms of assembly, interacts with URE2 and GDH2. Also interacts with the TORC1 kinase complex.

Its subcellular location is the cytoplasm. The catalysed reaction is L-seryl-[protein] + ATP = O-phospho-L-seryl-[protein] + ADP + H(+). It catalyses the reaction L-threonyl-[protein] + ATP = O-phospho-L-threonyl-[protein] + ADP + H(+). In terms of biological role, serine/threonine-protein kinase involved in the phosphorylation of the NAD(+)-dependent glutamate dehydrogenase GDH2. When overexpressed, confers hypersensitivity to rapamycin and induces rapid nuclear accumulation of GLN3 to activate the transcription of nitrogen-regulated genes. This chain is Nitrogen network kinase 1 (NNK1), found in Saccharomyces cerevisiae (strain ATCC 204508 / S288c) (Baker's yeast).